The chain runs to 86 residues: Large ribosomal subunit protein uL10 (86 aa).

Belongs to the universal ribosomal protein uL10 family. In terms of assembly, part of the ribosomal stalk of the 50S ribosomal subunit. The N-terminus interacts with L11 and the large rRNA to form the base of the stalk. The C-terminus forms an elongated spine to which L12 dimers bind in a sequential fashion forming a multimeric L10(L12)X complex.

Functionally, forms part of the ribosomal stalk, playing a central role in the interaction of the ribosome with GTP-bound translation factors. This is Large ribosomal subunit protein uL10 (rplJ) from Serratia marcescens.